Reading from the N-terminus, the 331-residue chain is Flagellar P-ring protein (331 aa).

The first 22 residues, 1 to 22, serve as a signal peptide directing secretion; the sequence is MRKVTIFIIIIVALTGFGSVRI.

It belongs to the FlgI family. As to quaternary structure, the basal body constitutes a major portion of the flagellar organelle and consists of four rings (L,P,S, and M) mounted on a central rod.

It localises to the periplasm. Its subcellular location is the bacterial flagellum basal body. In terms of biological role, assembles around the rod to form the L-ring and probably protects the motor/basal body from shearing forces during rotation. The sequence is that of Flagellar P-ring protein from Pseudothermotoga lettingae (strain ATCC BAA-301 / DSM 14385 / NBRC 107922 / TMO) (Thermotoga lettingae).